The sequence spans 454 residues: MAMAAMDARKKKSGGGGGEPLLGKYELGRMLGRGTFAKVYLARAVAGGEAVAVKVIDKAEVMGTAGMAPRVLREVAAMRRLRHPHVLRLHEVLATRARIYLVMELATGGDLLSRLAALPRRRLPESAARRVFVQLVDALSYCHARGVAHRDVKPQNVLLDGDGNLKVSDFGLAALPDTLRDDGRLHTACGTPAYAAPEVLRRRAYDGAKADAWSCGVILFVLLAGHLPFDDSNIADMCRKAHRREYELPRWVSQPARRLVSRLLDPNPDTRVAVESLAAHHPWFKRSLSVDSQLDGLLNGEPERAVAFQAAPPPPLNAFDIISMSPGLDLSGLFGEHDKSLREKRFTTTASPEKTLEQLGLAGGKLGYVVVVGKKGVECLPLAGGRLSSGIAAMSVEMSEVAPPLLLVELRLEVAAGDVDGGDGEVKGFGWEQLRMELGDVVRAWHSCEDLCEI.

Residues 25–284 (YELGRMLGRG…ESLAAHHPWF (260 aa)) enclose the Protein kinase domain. Residues 31–39 (LGRGTFAKV) and Lys-54 each bind ATP. Asp-151 (proton acceptor) is an active-site residue. The activation loop stretch occupies residues 169 to 198 (DFGLAALPDTLRDDGRLHTACGTPAYAAPE). An NAF domain is found at 311–335 (APPPPLNAFDIISMSPGLDLSGLFG). Positions 341-370 (LREKRFTTTASPEKTLEQLGLAGGKLGYVV) are PPI.

Belongs to the protein kinase superfamily. CAMK Ser/Thr protein kinase family. SNF1 subfamily. Requires Mn(2+) as cofactor.

The enzyme catalyses L-seryl-[protein] + ATP = O-phospho-L-seryl-[protein] + ADP + H(+). The catalysed reaction is L-threonyl-[protein] + ATP = O-phospho-L-threonyl-[protein] + ADP + H(+). Functionally, CIPK serine-threonine protein kinases interact with CBL proteins. Binding of a CBL protein to the regulatory NAF domain of CIPK protein lead to the activation of the kinase in a calcium-dependent manner. This Oryza sativa subsp. japonica (Rice) protein is CBL-interacting protein kinase 4 (CIPK4).